Here is a 1360-residue protein sequence, read N- to C-terminus: Transmembrane protein 94 (1360 aa).

The Cytoplasmic portion of the chain corresponds to 1 to 64 (MDLREKHLGE…FLHLSNRCSC (64 aa)). The chain crosses the membrane as a helical span at residues 65–85 (FHWPGASLMLLAVLLLLCCCG). At 86–92 (GQPAGSQ) the chain is on the lumenal side. Residues 93–113 (GVELVNASALFLLLLLNLVLI) traverse the membrane as a helical segment. The Cytoplasmic portion of the chain corresponds to 114–273 (GRQDRLKRRE…RPVTALDNER (160 aa)). Phosphoserine occurs at positions 221 and 225. The chain crosses the membrane as a helical span at residues 274–294 (FTVQSVMLHYAVPVVLAGFLI). Over 295–320 (TNALRFMFKAPGVTSWQYTLLQLQVN) the chain is Lumenal. The chain crosses the membrane as a helical span at residues 321–341 (GMLPILPLLFPVLWVLATACG). At 342 to 1096 (EARVLAQMSK…RHATYGIRKC (755 aa)) the chain is on the cytoplasmic side. Residues 417-422 (DKQGIL) carry the DKQGIL motif. Residues Ser444, Ser445, and Ser454 each carry the phosphoserine modification. The disordered stretch occupies residues 487 to 545 (EQERSDWLADGPKPSEPYPHHKGHGRSKHPSGSNVSFSRDTEGGEEEPSKAQPGTEGDP). Over residues 506 to 515 (HHKGHGRSKH) the composition is skewed to basic residues. Phosphoserine is present on residues Ser517, Ser522, Ser802, and Ser945. The chain crosses the membrane as a helical span at residues 1097–1117 (FLFLLQCQLTLVVIQFLSCLV). Topologically, residues 1118–1124 (QLPPLLS) are lumenal. The helical transmembrane segment at 1125–1145 (TTDILWLSCFCYPLLSISLLG) threads the bilayer. At 1146–1171 (KPPHSSIMSMATGKNLQSIPKKTQHY) the chain is on the cytoplasmic side. Residues 1172-1192 (FLLCFLLKFSLTISSCLVCFG) form a helical membrane-spanning segment. Topologically, residues 1193–1232 (FTLQSFCDSARARNLTNCSSVMLCSNDDRAPAWFEDFANG) are lumenal. 2 N-linked (GlcNAc...) asparagine glycosylation sites follow: Asn1206 and Asn1209. A helical transmembrane segment spans residues 1233 to 1253 (LLSAQKLTAALIVLHTVFISI). At 1254 to 1269 (THVHRTKPLWRKSPLT) the chain is on the cytoplasmic side. A helical transmembrane segment spans residues 1270 to 1290 (NLWWAVTVPVVLLGQVVQTVV). The Lumenal portion of the chain corresponds to 1291–1310 (DLQLWTHRDSRVHFGLEDVP). A helical membrane pass occupies residues 1311–1331 (LLTWLLGCLSLVLVVVTNEIV). At 1332-1360 (KLHEIRVRVRYQKRQKLQFETKLGMNSPF) the chain is on the cytoplasmic side. The GMN; metal-binding motif motif lies at 1355-1357 (GMN).

As to quaternary structure, forms homooligomers.

Its subcellular location is the endoplasmic reticulum membrane. Could function in the uptake of Mg(2+) from the cytosol into the endoplasmic reticulum and regulate intracellular Mg(2+) homeostasis. This is Transmembrane protein 94 from Mus musculus (Mouse).